Consider the following 227-residue polypeptide: DNA repair protein RecO (227 aa).

This sequence belongs to the RecO family.

Functionally, involved in DNA repair and RecF pathway recombination. The protein is DNA repair protein RecO of Pseudomonas putida (strain ATCC 700007 / DSM 6899 / JCM 31910 / BCRC 17059 / LMG 24140 / F1).